The chain runs to 45 residues: MGYKCTRCKQKVEIDYEYTGIRCPYCGHRILVKERPTTIKRIKAE.

Zn(2+)-binding residues include cysteine 8, cysteine 23, and cysteine 26.

It belongs to the archaeal Rpo12/eukaryotic RPC10 RNA polymerase subunit family. In terms of assembly, part of the RNA polymerase complex. Zn(2+) is required as a cofactor.

The protein resides in the cytoplasm. It carries out the reaction RNA(n) + a ribonucleoside 5'-triphosphate = RNA(n+1) + diphosphate. Its function is as follows. DNA-dependent RNA polymerase (RNAP) catalyzes the transcription of DNA into RNA using the four ribonucleoside triphosphates as substrates. This Methanosarcina acetivorans (strain ATCC 35395 / DSM 2834 / JCM 12185 / C2A) protein is DNA-directed RNA polymerase subunit Rpo12.